The following is a 685-amino-acid chain: MSCQISCKSRRGGGGGGGGGFRGFSSGSAVVSGGSRRSTSGFSCLSRHGGGRGGSGGGGFGSQSLVGLGGYKSISSSVAGYGGGFGGRSYGGFGGGSGFGGSGGFGGGSGFGGGRGFGGGSGFGGGSGFGGGSGFGGGSGFGGGGFGGGRFGGGPGGFGGPGGFPGGGIHEVSVNQSLLQPLDVKVDPEIQNVKSQEREQIKTLNNKFASFIDTVRFLEQQNQVLHTKWELLQQLDVGTRTTNLDPVFQAYIGILKKQVDRLTAERNSQDSELNNMQDLVEDFKKKYEDEINKRTSAENDFVTIKKDVDSCYMDKTELQAKMEMLTQEVDFLRTLYDTELSQLQQNVTDTNVILSMDNNRNLDLDSIIAEVQSQYEIIAHKSKAESEELYHSKANEELQVTAVKHGDSLKEIKMEISELNRTIQRLQGEISHVKKQCKGVQDSIADAEQRGEHAIKDARGKLTDLEEALQQGRENLARLLRDYQELMNVKLALDVEIATYRKLLEGEECRMSGDFSDNVSVSVTSSTISSSVASKAGFGSGGQSSGGRGSYGGRGGGSTYGSGGRSSGVRGSGSGSGGGGYSSGGGSRGGSGGGGYSTGGGSRGGSSSGGGGYSSGGGSRGDSSSGGGSRGGSGGGSRGGSGGGGYSSGGGSRGGSSSGGAVSGSERGGSGSGEGCGSGVTFSFR.

The segment at 1–20 (MSCQISCKSRRGGGGGGGGG) is disordered. The head stretch occupies residues 1-196 (MSCQISCKSR…DPEIQNVKSQ (196 aa)). An Asymmetric dimethylarginine modification is found at Arg-22. 2 positions are modified to phosphoserine: Ser-25 and Ser-28. Arg-52 carries the omega-N-methylarginine modification. Residue Ser-64 is modified to Phosphoserine. The interval 197–232 (EREQIKTLNNKFASFIDTVRFLEQQNQVLHTKWELL) is coil 1A. The 315-residue stretch at 197-511 (EREQIKTLNN…KLLEGEECRM (315 aa)) folds into the IF rod domain. The tract at residues 233–251 (QQLDVGTRTTNLDPVFQAY) is linker 1. The coil 1B stretch occupies residues 252 to 343 (IGILKKQVDR…TLYDTELSQL (92 aa)). The segment at 344-367 (QQNVTDTNVILSMDNNRNLDLDSI) is linker 12. A coil 2 region spans residues 368–507 (IAEVQSQYEI…ATYRKLLEGE (140 aa)). Residues 508–685 (ECRMSGDFSD…CGSGVTFSFR (178 aa)) are tail. The interval 532-685 (VASKAGFGSG…CGSGVTFSFR (154 aa)) is disordered. The segment covering 538–678 (FGSGGQSSGG…GSGSGEGCGS (141 aa)) has biased composition (gly residues). Omega-N-methylarginine is present on residues Arg-554, Arg-588, Arg-603, and Arg-653.

Belongs to the intermediate filament family. As to quaternary structure, heterotetramer of two type I and two type II keratins. Associates with KRT10.

The protein resides in the cytoplasm. Its function is as follows. Probably contributes to terminal cornification. Associated with keratinocyte activation, proliferation and keratinization. Required for maintenance of corneocytes and keratin filaments in suprabasal keratinocytes in the epidermis of the ear, potentially via moderation of expression and localization of keratins and their partner proteins. Plays a role in the establishment of the epidermal barrier on plantar skin. The polypeptide is Keratin, type II cytoskeletal 2 epidermal (Rattus norvegicus (Rat)).